A 155-amino-acid polypeptide reads, in one-letter code: Small ribosomal subunit protein uS7c (155 aa).

It belongs to the universal ribosomal protein uS7 family. In terms of assembly, part of the 30S ribosomal subunit.

Its subcellular location is the plastid. It is found in the chloroplast. In terms of biological role, one of the primary rRNA binding proteins, it binds directly to 16S rRNA where it nucleates assembly of the head domain of the 30S subunit. This is Small ribosomal subunit protein uS7c (rps7) from Stewartia pseudocamellia (Japanese stewartia).